We begin with the raw amino-acid sequence, 372 residues long: MPHQQILMLFGLLPVATNISTWWNFGSMLLTCSALQIMTGFFLSMHYTANINLAFSSIVHVVRDVPHGWMMQNLHAIGASMFFICVYIHVARGLYYGSYLNKETWLSGTTLLIMLMATAFFGYVLPWGQMSFWAATVITNLLTAIPYLGTTMTTWLWGGFAINDPTLTRFFALHFILPFGIISLSSLHIMLLHAEGSSNPLGTNSDIDKIPFHPYHTYKDLFMISSMIMIMLLTISFIPDIFNDPENFSKANPLVTPQHIKPEWYFLFAYGILRSIPNKLGGALALAMSITILLTVPFTHTANTRSMTFRPFMQLMFWTLVTTFMIITWTATKPVEPPYTMISQVTSSLYFMFFMSNPIVGWLENKIMKTQL.

4 consecutive transmembrane segments (helical) span residues 25-45 (FGSMLLTCSALQIMTGFFLSM), 69-90 (WMMQNLHAIGASMFFICVYIHV), 105-125 (WLSGTTLLIMLMATAFFGYVL), and 170-190 (FFALHFILPFGIISLSSLHIM). Residues histidine 75 and histidine 89 each contribute to the heme b site. The heme b site is built by histidine 174 and histidine 188. Histidine 193 serves as a coordination point for a ubiquinone. Transmembrane regions (helical) follow at residues 218-238 (YKDLFMISSMIMIMLLTISFI), 280-300 (LGGALALAMSITILLTVPFTH), 312-332 (FMQLMFWTLVTTFMIITWTAT), and 339-358 (YTMISQVTSSLYFMFFMSNP).

This sequence belongs to the cytochrome b family. In terms of assembly, the cytochrome bc1 complex contains 3 respiratory subunits (MT-CYB, CYC1 and UQCRFS1), 2 core proteins (UQCRC1 and UQCRC2) and probably 6 low-molecular weight proteins. It depends on heme b as a cofactor.

The protein resides in the mitochondrion inner membrane. In terms of biological role, component of the ubiquinol-cytochrome c reductase complex (complex III or cytochrome b-c1 complex) that is part of the mitochondrial respiratory chain. The b-c1 complex mediates electron transfer from ubiquinol to cytochrome c. Contributes to the generation of a proton gradient across the mitochondrial membrane that is then used for ATP synthesis. This is Cytochrome b (MT-CYB) from Acrantophis dumerili (Dumeril's ground boa).